Consider the following 180-residue polypeptide: Bifunctional protein PyrR (180 aa).

Residues 99–111 carry the PRPP-binding motif; it reads VILVDDVLYTCRT.

It belongs to the purine/pyrimidine phosphoribosyltransferase family. PyrR subfamily. In terms of assembly, homodimer and homohexamer; in equilibrium.

The enzyme catalyses UMP + diphosphate = 5-phospho-alpha-D-ribose 1-diphosphate + uracil. Functionally, regulates transcriptional attenuation of the pyrimidine nucleotide (pyr) operon by binding in a uridine-dependent manner to specific sites on pyr mRNA. This disrupts an antiterminator hairpin in the RNA and favors formation of a downstream transcription terminator, leading to a reduced expression of downstream genes. Its function is as follows. Also displays a weak uracil phosphoribosyltransferase activity which is not physiologically significant. This Clostridium botulinum (strain Eklund 17B / Type B) protein is Bifunctional protein PyrR.